A 56-amino-acid chain; its full sequence is Chymotrypsin inhibitor (56 aa).

Disulfide bonds link C3/C36, C12/C32, C16/C28, C20/C56, and C38/C50. The region spanning 3–56 (CGPNEVFNTCGSACAPTCAQPKTRICTMQCRIGCQCQEGFLRNGEGACVLPENC) is the TIL domain.

The protein belongs to the serine protease inhibitor-like (TIL domain-containing) family.

The protein localises to the secreted. Functionally, chymotrypsin and cathepsin G inhibitor. This Apis mellifera (Honeybee) protein is Chymotrypsin inhibitor.